The chain runs to 309 residues: Serine/threonine-protein phosphatase 2A catalytic subunit alpha isoform (309 aa).

Residues aspartate 57, histidine 59, aspartate 85, and asparagine 117 each contribute to the Mn(2+) site. Aspartate 57, histidine 59, and aspartate 85 together coordinate Zn(2+). Residues aspartate 85 and asparagine 117 each contribute to the Fe(3+) site. Catalysis depends on histidine 118, which acts as the Proton donor. The Mn(2+) site is built by histidine 167 and histidine 241. The Fe(3+) site is built by histidine 167 and histidine 241. At tyrosine 307 the chain carries Phosphotyrosine. Leucine 309 is subject to Leucine methyl ester.

The protein belongs to the PPP phosphatase family. PP-1 subfamily. As to quaternary structure, PP2A consists of a common heterodimeric core enzyme, composed of PPP2CA, a 36 kDa catalytic subunit (subunit C), and PPP2R1A, a 65 kDa constant regulatory subunit (PR65 or subunit A), that associates with a variety of regulatory subunits. Proteins that associate with the core dimer include three families of regulatory subunits B (the R2/B/PR55/B55, R3/B''/PR72/PR130/PR59 and R5/B'/B56 families), the 48 kDa variable regulatory subunit, viral proteins, and cell signaling molecules. May indirectly interact with SGOL1, most probably through regulatory B56 subunits. Phosphatase component of the Integrator-PP2A (INTAC) complex, composed of the Integrator core complex and protein phosphatase 2A subunits PPP2CA and PPP2R1A. The cofactor is Mn(2+). Fe(3+) is required as a cofactor. It depends on Zn(2+) as a cofactor. Reversibly methyl esterified on Leu-309 by leucine carboxyl methyltransferase 1 (LCMT1) and protein phosphatase methylesterase 1 (PPME1). Carboxyl methylation influences the affinity of the catalytic subunit for the different regulatory subunits, thereby modulating the PP2A holoenzyme's substrate specificity, enzyme activity and cellular localization. Post-translationally, phosphorylation of either threonine (by autophosphorylation-activated protein kinase) or tyrosine results in inactivation of the phosphatase. Auto-dephosphorylation has been suggested as a mechanism for reactivation.

It is found in the cytoplasm. The protein localises to the nucleus. Its subcellular location is the chromosome. The protein resides in the centromere. It localises to the cytoskeleton. It is found in the spindle pole. It catalyses the reaction O-phospho-L-seryl-[protein] + H2O = L-seryl-[protein] + phosphate. It carries out the reaction O-phospho-L-threonyl-[protein] + H2O = L-threonyl-[protein] + phosphate. With respect to regulation, inhibited by the interaction between PPP2R2A and ARPP19; this inhibition is enhanced when ARPP19 is phosphorylated. Inhibited by the interaction between PPP2R2A and PABIR1/FAM122A. In terms of biological role, PP2A is the major phosphatase for microtubule-associated proteins (MAPs). PP2A can modulate the activity of phosphorylase B kinase casein kinase 2, mitogen-stimulated S6 kinase, and MAP-2 kinase. Key mediator of a quality checkpoint during transcription elongation as part of the Integrator-PP2A (INTAC) complex. The INTAC complex drives premature transcription termination of transcripts that are unfavorably configured for transcriptional elongation: within the INTAC complex, PPP2CA catalyzes dephosphorylation of the C-terminal domain (CTD) of Pol II subunit POLR2A/RPB1 and SUPT5H/SPT5, thereby preventing transcriptional elongation. In Gallus gallus (Chicken), this protein is Serine/threonine-protein phosphatase 2A catalytic subunit alpha isoform (PPP2CA).